Reading from the N-terminus, the 452-residue chain is F-box only protein 47 (452 aa).

The F-box domain maps to Phe41–Leu91.

As to quaternary structure, part of a SCF (SKP1-cullin-F-box) protein ligase complex. Widely expressed, with highest levels in kidney, liver and pancreas. Down-regulated in tumors.

Its function is as follows. Probably recognizes and binds to some phosphorylated proteins and promotes their ubiquitination and degradation. This is F-box only protein 47 from Homo sapiens (Human).